The sequence spans 1106 residues: DNA polymerase delta catalytic subunit (1106 aa).

The tract at residues 1 to 28 (MDGKRRPGPGPGVPPKRARGGLWDEDEA) is disordered. Residues 4-19 (KRRPGPGPGVPPKRAR) carry the Nuclear localization signal motif. Arginine 19 is modified (omega-N-methylarginine). Lysine 573 is covalently cross-linked (Glycyl lysine isopeptide (Lys-Gly) (interchain with G-Cter in SUMO2)). Zn(2+) contacts are provided by cysteine 1011, cysteine 1014, cysteine 1025, and cysteine 1028. The CysA-type zinc-finger motif lies at 1011–1028 (CIGCRTVLSHQGAVCKFC). Positions 1057, 1060, 1070, and 1075 each coordinate [4Fe-4S] cluster. The CysB motif motif lies at 1057 to 1075 (CQRCQGSLHEDVICTSRDC).

It belongs to the DNA polymerase type-B family. In terms of assembly, component of the tetrameric DNA polymerase delta complex (Pol-delta4), which consists of POLD1/p125, POLD2/p50, POLD3/p66/p68 and POLD4/p12, with POLD1 bearing both DNA polymerase and 3' to 5' proofreading exonuclease activities. Within Pol-delta4, directly interacts with POLD2 and POLD4. Following genotoxic stress by DNA-damaging agents, such as ultraviolet light and methyl methanesulfonate, or by replication stress induced by treatment with hydroxyurea or aphidicolin, Pol-delta4 is converted into a trimeric form of the complex (Pol-delta3) by POLD4 degradation. Pol-delta3 is the major form at S phase replication sites and DNA damage sites. POLD1 displays different catalytic properties depending upon the complex it is found in. It exhibits higher proofreading activity and fidelity than Pol-delta4, making it particularly well suited to respond to DNA damage. Directly interacts with PCNA, as do POLD3 and POLD4; this interaction stimulates Pol-delta4 polymerase activity. As POLD2 and POLD4, directly interacts with WRNIP1; this interaction stimulates DNA polymerase delta-mediated DNA synthesis, independently of the presence of PCNA. This stimulation may be due predominantly to an increase of initiation frequency and also to increased processivity. Also observed as a dimeric complex with POLD2 (Pol-delta2). Pol-delta2 is relatively insensitive to the PCNA stimulation (2-5-fold) compared to Pol-delta4 that is stimulated by over 50-fold. Interacts with POLDIP2; this interaction is indirect and most probably mediated through POLD2-binding. Interacts with CIAO1. Interacts with POLDIP2. Interacts with RFC1. Requires [4Fe-4S] cluster as cofactor.

Its subcellular location is the nucleus. It carries out the reaction DNA(n) + a 2'-deoxyribonucleoside 5'-triphosphate = DNA(n+1) + diphosphate. With respect to regulation, regulated by alteration of quaternary structure. Exhibits burst rates of DNA synthesis are about 5 times faster in the presence of POLD4 (Pol-delta4 complex) than in its absence (Pol-delta3 complex), while the affinity of the enzyme for its DNA and dNTP substrates appears unchanged. The Pol-delta3 complex is more likely to proofread DNA synthesis because it cleaves single-stranded DNA twice as fast and transfers mismatched DNA from the polymerase to the exonuclease sites 9 times faster compared to the Pol-delta3 complex. Pol-delta3 also extends mismatched primers 3 times more slowly in the absence of POLD4. The conversion of Pol-delta4 into Pol-delta3 is induced by genotoxic stress or by replication stress leading POLD4 degradation. Stimulated in the presence of PCNA. This stimulation is further increased in the presence of KCTD13/PDIP1, most probably via direct interaction between KCTD13 and POLD2. As the catalytic component of the trimeric (Pol-delta3 complex) and tetrameric DNA polymerase delta complexes (Pol-delta4 complex), plays a crucial role in high fidelity genome replication, including in lagging strand synthesis, and repair. Exhibits both DNA polymerase and 3'- to 5'-exonuclease activities. Requires the presence of accessory proteins POLD2, POLD3 and POLD4 for full activity. Depending upon the absence (Pol-delta3) or the presence of POLD4 (Pol-delta4), displays differences in catalytic activity. Most notably, expresses higher proofreading activity in the context of Pol-delta3 compared with that of Pol-delta4. Although both Pol-delta3 and Pol-delta4 process Okazaki fragments in vitro, Pol-delta3 may be better suited to fulfill this task, exhibiting near-absence of strand displacement activity compared to Pol-delta4 and stalling on encounter with the 5'-blocking oligonucleotides. Pol-delta3 idling process may avoid the formation of a gap, while maintaining a nick that can be readily ligated. Along with DNA polymerase kappa, DNA polymerase delta carries out approximately half of nucleotide excision repair (NER) synthesis following UV irradiation. Under conditions of DNA replication stress, in the presence of POLD3 and POLD4, may catalyze the repair of broken replication forks through break-induced replication (BIR). Involved in the translesion synthesis (TLS) of templates carrying O6-methylguanine, 8oxoG or abasic sites. The chain is DNA polymerase delta catalytic subunit (POLD1) from Bos taurus (Bovine).